The primary structure comprises 388 residues: Arrestin-C (388 aa).

The protein belongs to the arrestin family. In terms of assembly, homodimer; disulfide-linked in response to retinal illumination. Interacts with CXCR4; the interaction is dependent on the C-terminal phosphorylation of CXCR4 and modulates the calcium ion mobilization activity of CXCR4. Interacts with GPR84. In terms of tissue distribution, inner and outer segments, and the inner plexiform regions of the retina.

The protein resides in the photoreceptor inner segment. Its subcellular location is the cell projection. It is found in the cilium. It localises to the photoreceptor outer segment. Its function is as follows. May play a role in an as yet undefined retina-specific signal transduction. Could bind to photoactivated-phosphorylated red/green opsins. This Homo sapiens (Human) protein is Arrestin-C (ARR3).